The following is a 507-amino-acid chain: ATP synthase subunit alpha, chloroplastic (507 aa).

Residue 170–177 (GDRQTGKT) coordinates ATP.

The protein belongs to the ATPase alpha/beta chains family. F-type ATPases have 2 components, CF(1) - the catalytic core - and CF(0) - the membrane proton channel. CF(1) has five subunits: alpha(3), beta(3), gamma(1), delta(1), epsilon(1). CF(0) has four main subunits: a, b, b' and c.

It is found in the plastid. It localises to the chloroplast thylakoid membrane. The catalysed reaction is ATP + H2O + 4 H(+)(in) = ADP + phosphate + 5 H(+)(out). Functionally, produces ATP from ADP in the presence of a proton gradient across the membrane. The alpha chain is a regulatory subunit. This chain is ATP synthase subunit alpha, chloroplastic, found in Cycas taitungensis (Prince sago).